The following is a 39-amino-acid chain: Decorsin (39 aa).

Positions 27–38 (CRFPRGDADPYC) are high affinity binding domain. Residues 31-33 (RGD) carry the Cell attachment site motif.

This sequence belongs to the ornatin family.

The protein localises to the secreted. In terms of biological role, inhibits fibrinogen interaction with platelet receptors expressed on glycoprotein IIb-IIIa complex. May prevent blood from clotting during either feeding and/or storage of ingested blood. This chain is Decorsin, found in Macrobdella decora (North American leech).